Reading from the N-terminus, the 234-residue chain is Uracil-DNA glycosylase (234 aa).

Residue Asp68 is the Proton acceptor of the active site.

It belongs to the uracil-DNA glycosylase (UDG) superfamily. UNG family.

It is found in the cytoplasm. It carries out the reaction Hydrolyzes single-stranded DNA or mismatched double-stranded DNA and polynucleotides, releasing free uracil.. Its function is as follows. Excises uracil residues from the DNA which can arise as a result of misincorporation of dUMP residues by DNA polymerase or due to deamination of cytosine. The polypeptide is Uracil-DNA glycosylase (Ruegeria sp. (strain TM1040) (Silicibacter sp.)).